The chain runs to 235 residues: Casparian strip membrane protein 2 (235 aa).

The disordered stretch occupies residues M1–G46. Over M1–C67 the chain is Cytoplasmic. Residues L68–I88 form a helical membrane-spanning segment. Residues S89 to A115 are Extracellular-facing. Residues F116–F136 form a helical membrane-spanning segment. Residues S137 to K150 lie on the Cytoplasmic side of the membrane. A helical membrane pass occupies residues L151–A171. The Extracellular segment spans residues A172–G203. Residues A204–F224 form a helical membrane-spanning segment. Residues T225–S235 lie on the Cytoplasmic side of the membrane.

The protein belongs to the Casparian strip membrane proteins (CASP) family. Homodimer and heterodimers.

The protein resides in the cell membrane. Functionally, regulates membrane-cell wall junctions and localized cell wall deposition. Required for establishment of the Casparian strip membrane domain (CSD) and the subsequent formation of Casparian strips, a cell wall modification of the root endodermis that determines an apoplastic barrier between the intraorganismal apoplasm and the extraorganismal apoplasm and prevents lateral diffusion. The chain is Casparian strip membrane protein 2 from Oryza sativa subsp. indica (Rice).